The following is a 358-amino-acid chain: Aminomethyltransferase (358 aa).

It belongs to the GcvT family. In terms of assembly, the glycine cleavage system is composed of four proteins: P, T, L and H.

The catalysed reaction is N(6)-[(R)-S(8)-aminomethyldihydrolipoyl]-L-lysyl-[protein] + (6S)-5,6,7,8-tetrahydrofolate = N(6)-[(R)-dihydrolipoyl]-L-lysyl-[protein] + (6R)-5,10-methylene-5,6,7,8-tetrahydrofolate + NH4(+). In terms of biological role, the glycine cleavage system catalyzes the degradation of glycine. This Francisella tularensis subsp. tularensis (strain WY96-3418) protein is Aminomethyltransferase.